Reading from the N-terminus, the 218-residue chain is MRQPLRTIGLLGGTFDPIHYGHLRPAEEVREAVQLSELRLIPARIPPHRARPRVGPEQRAELVRRAVADNPSACVDERELHRDGPSYTVDTLAELRAELGGVSLCLILGYDTFLGLPGWSRWRQLFERAHVVVTERPGVRGALPEALATEVARRVAHEPAELRHRPAGCILFQAVTPVDISATGIRRSLALGRSVRYLLPEAVRQRVVEAGWYGYPQL.

Belongs to the NadD family.

The catalysed reaction is nicotinate beta-D-ribonucleotide + ATP + H(+) = deamido-NAD(+) + diphosphate. The protein operates within cofactor biosynthesis; NAD(+) biosynthesis; deamido-NAD(+) from nicotinate D-ribonucleotide: step 1/1. In terms of biological role, catalyzes the reversible adenylation of nicotinate mononucleotide (NaMN) to nicotinic acid adenine dinucleotide (NaAD). The protein is Probable nicotinate-nucleotide adenylyltransferase of Halorhodospira halophila (strain DSM 244 / SL1) (Ectothiorhodospira halophila (strain DSM 244 / SL1)).